The following is a 518-amino-acid chain: MGTETKSNSYTGQISTSGGNPKVMKDSLSLVRQTVNQQTLSLSQSNQVQNQLNSHSNSNSYPNPSGSENKNENEQNSRDIRAKPEDKSRKEAIVPFVPIFVEEADVIQGAKELLKVIRPTWDLSHVEFKIRVVPQIEDRYPAQNAMVMMTLYSFTDGITNKLVGCFHKEISKLNDENGGSYLPIKTQGLSPVQSEDPVIIEKEDDDEFTDDRAADDGSPVQYSDNVVLVRIYGNKTDLLIDRKAETQNFLLLHTYGLAPSLYATFKNGLVYEYVPGTTLNTDSVLCPEIWPLVARRMAEMHRKVRKHGDSSATKPMPMIWKKTQSFLDLVPERFSDAEKHKRVKETFLPIGRLREEFNKLYEYLEALDSPIVFSHNDLLLGNVIYTQSLNTVNFIDYEYADYNFQAFDIGNHFAEMCGVDEVDYSRYPKREFQLQWLRVYLEEYLQRSNIQNDEVELLYVQVNQFALASHIFWTVWSLLQAEHSTIDFDYVGYAFLRYNEYLARKVEFLSLTAAKNNK.

Positions 1–19 are enriched in polar residues; that stretch reads MGTETKSNSYTGQISTSGG. The tract at residues 1-88 is disordered; that stretch reads MGTETKSNSY…DIRAKPEDKS (88 aa). Residues 33–68 show a composition bias toward low complexity; sequence QTVNQQTLSLSQSNQVQNQLNSHSNSNSYPNPSGSE. A compositionally biased stretch (basic and acidic residues) spans 69–88; it reads NKNENEQNSRDIRAKPEDKS. A phosphoserine mark is found at Ser-190 and Ser-194.

Belongs to the choline/ethanolamine kinase family.

The protein localises to the cytoplasm. The enzyme catalyses ethanolamine + ATP = phosphoethanolamine + ADP + H(+). Its pathway is phospholipid metabolism; phosphatidylethanolamine biosynthesis; phosphatidylethanolamine from ethanolamine: step 1/3. Functionally, highly specific for ethanolamine phosphorylation. May be a rate-controlling step in phosphatidylethanolamine biosynthesis. This Drosophila melanogaster (Fruit fly) protein is Ethanolamine kinase (eas).